The following is a 91-amino-acid chain: Small ribosomal subunit protein uS19 (91 aa).

It belongs to the universal ribosomal protein uS19 family.

Its function is as follows. Protein S19 forms a complex with S13 that binds strongly to the 16S ribosomal RNA. This is Small ribosomal subunit protein uS19 from Sulfurimonas denitrificans (strain ATCC 33889 / DSM 1251) (Thiomicrospira denitrificans (strain ATCC 33889 / DSM 1251)).